We begin with the raw amino-acid sequence, 317 residues long: Insulin-like growth factor-binding protein 2 (317 aa).

Residues 1–33 (MQPRLGGPALLLLPPLLLLLLLGAGGGDCGARA) form the signal peptide. Residues 35–126 (VLFRCPPCTP…VHGEGTCEKH (92 aa)) form the IGFBP N-terminal domain. 6 cysteine pairs are disulfide-bonded: cysteine 39–cysteine 76, cysteine 42–cysteine 78, cysteine 50–cysteine 79, cysteine 68–cysteine 82, cysteine 90–cysteine 103, and cysteine 97–cysteine 123. Disordered regions lie at residues 125–151 (KHGDAEYSASPEQVADNGEEHSEGGQV) and 189–218 (EQHRQMGKGGKHHLGLEEPKKLRPPPARTP). Residues 216-298 (RTPCQQELDQ…APTIRGDPEC (83 aa)) enclose the Thyroglobulin type-1 domain. Cystine bridges form between cysteine 219–cysteine 253, cysteine 264–cysteine 275, and cysteine 277–cysteine 298. The short motif at 293–295 (RGD) is the Cell attachment site element.

As to quaternary structure, interacts with IGF1. Interacts with IGF2. Interacts (via RGD motif) with integrin alpha5/ITGA5; this interaction induces cell migration, adhesion or apoptosis according to the context. Interacts with PTPRB; this interaction leads to PTPRB dimerization and inactivation. Cleaved by MMP9 leading to release of free IGF2 from IGFBP2-IGF2 complex, which contributes to enhance the motility and the growth of astrocytes. In terms of processing, O-glycosylated. Expressed in abundance in selected adult tissues, namely liver, kidney, adrenal, pituitary and choroid plexus.

It is found in the secreted. Its function is as follows. Multifunctional protein that plays a critical role in regulating the availability of IGFs such as IGF1 and IGF2 to their receptors and thereby regulates IGF-mediated cellular processes including proliferation, differentiation, and apoptosis in a cell-type specific manner. Functions coordinately with receptor protein tyrosine phosphatase beta/PTPRB and the IGF1 receptor to regulate IGF1-mediated signaling by stimulating the phosphorylation of PTEN leading to its inactivation and AKT1 activation. Plays a positive role in cell migration via interaction with integrin alpha5/ITGA5 through an RGD motif. Additionally, interaction with ITGA5/ITGB1 enhances the adhesion of endothelial progenitor cells to endothelial cells. Upon mitochondrial damage, facilitates apoptosis with ITGA5 of podocytes, and then activates the phosphorylation of focal adhesion kinase (FAK)-mediated mitochondrial injury. This Ovis aries (Sheep) protein is Insulin-like growth factor-binding protein 2 (IGFBP2).